The sequence spans 315 residues: Putative ankyrin repeat protein R600 (315 aa).

ANK repeat units follow at residues N79–V108, S118–T152, D153–S182, Q184–D211, and D212–T240.

This Acanthamoeba polyphaga mimivirus (APMV) protein is Putative ankyrin repeat protein R600.